The primary structure comprises 185 residues: MIDEILFDSEERMSNTVEHTREDLITIRTGRANPAMFNGVLAEYYGVPTPITQMSSISVPEPRMLIIKPYEMSSMGVIENAIRNSDLGVNPTNDGQVLRVTIPQLTEERRRDMVKIAKGKGEDGKIAIRNVRRKGMEQLKKLQKDGEFGEDEVAAAEKELDKITAHYVEQVDEIVARKEAELMEV.

Belongs to the RRF family.

It is found in the cytoplasm. Functionally, responsible for the release of ribosomes from messenger RNA at the termination of protein biosynthesis. May increase the efficiency of translation by recycling ribosomes from one round of translation to another. This is Ribosome-recycling factor from Corynebacterium efficiens (strain DSM 44549 / YS-314 / AJ 12310 / JCM 11189 / NBRC 100395).